A 277-amino-acid polypeptide reads, in one-letter code: Alpha-ketoglutarate-dependent dioxygenase tstK (277 aa).

The protein belongs to the asaB hydroxylase/desaturase family.

It carries out the reaction 2-[(1R,8S,14R,15R)-11-hydroxy-14,15-bis[(6E)-oct-6-en-1-yl]-3,5,9-trioxo-4,10-dioxatetracyclo[9.4.0.0(2,6).0(8,12)]pentadeca-2(6),12-dien-8-yl]acetate + 3 2-oxoglutarate + 3 O2 = phomoidride A + 3 succinate + 3 CO2 + H2O. In terms of biological role, alpha-ketoglutarate-dependent dioxygenase; part of the gene cluster that mediates the biosynthesis of the antihypercholesterolemic agents phomoidrides which are dimeric anhydrides. Within the pathway, tstK is responsible for the iterative oxidation necessary to convert prephomoidride to phomoidride A. The pathway begins with the highly reducing polyketide synthase tstiA that catalyzes the formation of a C12-fatty acyl-ACP, starting from one acetate and 5 malonate units. The hydrolase tstM is involved in the release of the C12-fatty acyl chain from phiA. The alkylcitrate synthase (ACS) tstJ and the alkylcitrate dehydratase (ACDH) tstI then give rise to decarboxylated monomeric anhydrides by coupling the C12-fatty acyl chain with oxalacetic acid. The cyclase tstC is responsible for the dimerization of the monomeric anhydrides which leads to the production of prephomoidride that contains the characteristic bicyclo[4.3.1]deca-1,6-diene system of phomoidrides. Iterative oxidation catalyzed by the alpha-ketoglutarate-dependent dioxygenase tstK produced then phomoidride A. Finally, the methyltransferase tstE converts phomoidride A to phomoidride B via an acetalization reaction. The phosphatidylethanolamine-binding protein tstB and tstN are not essential for dimerization and their functions have still to be determined. In Talaromyces stipitatus (strain ATCC 10500 / CBS 375.48 / QM 6759 / NRRL 1006) (Penicillium stipitatum), this protein is Alpha-ketoglutarate-dependent dioxygenase tstK.